The primary structure comprises 1056 residues: Kinesin-like protein KIF11 (1056 aa).

Positions 18-359 (NIQVVVRCRP…LEYAHRAKNI (342 aa)) constitute a Kinesin motor domain. Residue 105–112 (GQTGTGKT) participates in ATP binding. Lys-146 is modified (N6-acetyllysine). Coiled coils occupy residues 364 to 480 (EVNQ…KEEY) and 736 to 763 (LEEKCENIQKPLSSVQENIQQKSKDIVN). Position 458 is a phosphothreonine (Thr-458). A Glycyl lysine isopeptide (Lys-Gly) (interchain with G-Cter in SUMO2) cross-link involves residue Lys-477. At Thr-925 the chain carries Phosphothreonine. Thr-926 carries the post-translational modification Phosphothreonine; by CDK1. Ser-1033 bears the Phosphoserine; by NEK6 mark. Lys-1034 participates in a covalent cross-link: Glycyl lysine isopeptide (Lys-Gly) (interchain with G-Cter in ubiquitin).

It belongs to the TRAFAC class myosin-kinesin ATPase superfamily. Kinesin family. BimC subfamily. Interacts with the thyroid hormone receptor in the presence of thyroid hormone. Component of a large chromatin remodeling complex, at least composed of MYSM1, PCAF, RBM10 and KIF11/TRIP5. Interacts (via C-terminus) with the kinase NEK6 in both interphase and mitosis. Interacts with RARRES1 and AGBL2. Interacts with TPX2. Phosphorylated exclusively on serine during S phase, but on both serine and Thr-926 during mitosis, so controlling the association of KIF11 with the spindle apparatus (probably during early prophase). In terms of processing, a subset of this protein primarily localized at the spindle pole is phosphorylated by NEK6 during mitosis; phosphorylation is required for mitotic function. Post-translationally, ubiquitinated at Lys-1034 by UHRF1 via 'Lys-63'-linked ubiquitin chains, leading to interaction with spindle assembly factor TPX2, thereby ensuring accurate distribution to the spindles during metaphase.

It localises to the cytoplasm. Its subcellular location is the cytoskeleton. It is found in the spindle pole. Its function is as follows. Motor protein required for establishing a bipolar spindle and thus contributing to chromosome congression during mitosis. Required in non-mitotic cells for transport of secretory proteins from the Golgi complex to the cell surface. The protein is Kinesin-like protein KIF11 (KIF11) of Homo sapiens (Human).